The chain runs to 201 residues: Ubiquinone biosynthesis accessory factor UbiJ (201 aa).

The region spanning 15-112 (LNTFLYRSPA…QVVQNFVALA (98 aa)) is the SCP2 domain.

Belongs to the UbiJ family. As to quaternary structure, component of the Ubi complex metabolon, which regroups five ubiquinone biosynthesis proteins (UbiE, UbiF, UbiG, UbiH and UbiI) and two accessory factors (UbiK and the lipid-binding protein UbiJ). Interacts with UbiK and forms a complex composed of 2 UbiK subunits and 1 UbiJ subunit. The UbiK-UbiJ complex interacts with palmitoleic acid.

The protein resides in the cytoplasm. It functions in the pathway cofactor biosynthesis; ubiquinone biosynthesis. Required for ubiquinone (coenzyme Q) biosynthesis under aerobic conditions. Binds hydrophobic ubiquinone biosynthetic intermediates via its SCP2 domain and is essential for the stability of the Ubi complex. May constitute a docking platform where Ubi enzymes assemble and access their SCP2-bound polyprenyl substrates. This chain is Ubiquinone biosynthesis accessory factor UbiJ, found in Escherichia coli (strain K12).